We begin with the raw amino-acid sequence, 353 residues long: Photosystem II protein D1 (353 aa).

T2 carries the post-translational modification N-acetylthreonine. A Phosphothreonine modification is found at T2. 3 helical membrane-spanning segments follow: residues 29–46, 118–133, and 142–156; these read YIGWFGVIMIPTLLTATS, HFFIGICCYMGREWEL, and WIAVAYSAPVAAATA. H118 is a binding site for chlorophyll a. Y126 is a pheophytin a binding site. [CaMn4O5] cluster-binding residues include D170 and E189. The chain crosses the membrane as a helical span at residues 197–218; sequence FHMLGVAGVFGGSLFSAMHGSL. Residue H198 participates in chlorophyll a binding. Residues H215 and 264–265 each bind a quinone; that span reads SF. A Fe cation-binding site is contributed by H215. Residue H272 coordinates Fe cation. Residues 274–288 form a helical membrane-spanning segment; that stretch reads FLAAWPVIGIWFTAL. [CaMn4O5] cluster-binding residues include H332, E333, D342, and A344. Residues 345-353 constitute a propeptide that is removed on maturation; that stretch reads AFEAPSINA.

It belongs to the reaction center PufL/M/PsbA/D family. As to quaternary structure, PSII is composed of 1 copy each of membrane proteins PsbA, PsbB, PsbC, PsbD, PsbE, PsbF, PsbH, PsbI, PsbJ, PsbK, PsbL, PsbM, PsbT, PsbX, PsbY, PsbZ, Psb30/Ycf12, at least 3 peripheral proteins of the oxygen-evolving complex and a large number of cofactors. It forms dimeric complexes. The D1/D2 heterodimer binds P680, chlorophylls that are the primary electron donor of PSII, and subsequent electron acceptors. It shares a non-heme iron and each subunit binds pheophytin, quinone, additional chlorophylls, carotenoids and lipids. D1 provides most of the ligands for the Mn4-Ca-O5 cluster of the oxygen-evolving complex (OEC). There is also a Cl(-1) ion associated with D1 and D2, which is required for oxygen evolution. The PSII complex binds additional chlorophylls, carotenoids and specific lipids. is required as a cofactor. Post-translationally, tyr-161 forms a radical intermediate that is referred to as redox-active TyrZ, YZ or Y-Z. In terms of processing, C-terminally processed by CTPA; processing is essential to allow assembly of the oxygen-evolving complex and thus photosynthetic growth.

It localises to the plastid. It is found in the chloroplast thylakoid membrane. The enzyme catalyses 2 a plastoquinone + 4 hnu + 2 H2O = 2 a plastoquinol + O2. In terms of biological role, photosystem II (PSII) is a light-driven water:plastoquinone oxidoreductase that uses light energy to abstract electrons from H(2)O, generating O(2) and a proton gradient subsequently used for ATP formation. It consists of a core antenna complex that captures photons, and an electron transfer chain that converts photonic excitation into a charge separation. The D1/D2 (PsbA/PsbD) reaction center heterodimer binds P680, the primary electron donor of PSII as well as several subsequent electron acceptors. This chain is Photosystem II protein D1, found in Chlamydomonas moewusii (Chlamydomonas eugametos).